A 131-amino-acid polypeptide reads, in one-letter code: uncharacterized protein (131 aa).

Residues G60 to A100 are disordered. The span at R91–A100 shows a compositional bias: polar residues.

This is an uncharacterized protein from Homo sapiens (Human).